The primary structure comprises 1696 residues: uncharacterized protein (1696 aa).

Disordered stretches follow at residues 1–113 (MDSS…HPQY), 151–194 (DSWT…SRSR), 258–284 (DVTR…PEKK), and 299–376 (GRRE…KQRG). Pro residues predominate over residues 21 to 42 (LHPPSAPLPPPPPLPPPPPPRQ). Over residues 52 to 61 (GRSTQSNGQR) the composition is skewed to polar residues. Low complexity predominate over residues 96 to 113 (QQQHQPLSLQQQQQHPQY). The span at 170–183 (RNYQYDYSRNSSGV) shows a compositional bias: polar residues. 3 stretches are compositionally biased toward basic and acidic residues: residues 267 to 284 (EGAR…PEKK), 325 to 340 (ETPR…EWSR), and 358 to 376 (RGKE…KQRG). Ser378 carries the phosphoserine modification. Disordered regions lie at residues 419–483 (RALL…GGKL), 688–724 (SDIG…LDSP), 1063–1090 (IKHK…GGTS), 1184–1211 (TSKS…VAGS), 1319–1340 (GEAV…SGVR), 1361–1429 (VVSV…SDAS), and 1658–1696 (SESR…DSGM). Composition is skewed to basic and acidic residues over residues 421–436 (LLSD…ERNG) and 695–704 (DDNKRIDKNV). Phosphoserine is present on Ser708. The segment covering 1184–1204 (TSKSIEKIESSGGTSEHRTPE) has biased composition (basic and acidic residues). Positions 1361–1370 (VVSVPHRDPQ) are enriched in basic and acidic residues. Polar residues-rich tracts occupy residues 1389–1398 (NYSTQKSYPS), 1658–1667 (SESRCNQSIS), and 1677–1696 (SAAN…DSGM).

This is an uncharacterized protein from Arabidopsis thaliana (Mouse-ear cress).